The following is a 429-amino-acid chain: Zinc finger protein 385C (429 aa).

A Matrin-type 1 zinc finger spans residues 77 to 107; sequence ISCNICHLRFNSANQAEAHYKGHRHARKLKA. Disordered stretches follow at residues 109–224, 258–295, and 311–340; these read EAAK…GRGE, GHQG…GPSP, and QLKQ…NKLQ. The span at 125-146 shows a compositional bias: low complexity; sequence TVVSSASPPASGSPGTPQSKGP. Positions 147–162 are enriched in pro residues; it reads ASPPLGPSLQLPPTPD. Low complexity predominate over residues 181-193; that stretch reads CDAAASSSSSSCP. The segment at 225 to 259 adopts a Matrin-type 2 zinc-finger fold; the sequence is KGRLYCPTCKVTVNSASQLQAHNTGAKHRWMVEGH. Basic residues predominate over residues 262 to 284; that stretch reads APRRGRGRPVSRGGTGHKTKRVI. A Matrin-type 3 zinc finger spans residues 297 to 327; sequence FHCALCQLHVNSETQLKQHMSSRRHKDRLAG.

The protein localises to the nucleus. This Mus musculus (Mouse) protein is Zinc finger protein 385C.